A 520-amino-acid chain; its full sequence is 2-isopropylmalate synthase (520 aa).

The region spanning 12–274 (VVIFDTTLRD…WCNVESTMLT (263 aa)) is the Pyruvate carboxyltransferase domain. Mn(2+) contacts are provided by aspartate 21, histidine 209, histidine 211, and asparagine 245. The segment at 398–520 (KLTSLTVIAG…RDVPSAAAAS (123 aa)) is regulatory domain.

This sequence belongs to the alpha-IPM synthase/homocitrate synthase family. LeuA type 1 subfamily. Homodimer. It depends on Mn(2+) as a cofactor.

Its subcellular location is the cytoplasm. The catalysed reaction is 3-methyl-2-oxobutanoate + acetyl-CoA + H2O = (2S)-2-isopropylmalate + CoA + H(+). It participates in amino-acid biosynthesis; L-leucine biosynthesis; L-leucine from 3-methyl-2-oxobutanoate: step 1/4. In terms of biological role, catalyzes the condensation of the acetyl group of acetyl-CoA with 3-methyl-2-oxobutanoate (2-ketoisovalerate) to form 3-carboxy-3-hydroxy-4-methylpentanoate (2-isopropylmalate). This Nitrobacter hamburgensis (strain DSM 10229 / NCIMB 13809 / X14) protein is 2-isopropylmalate synthase.